The chain runs to 414 residues: Tryptophan synthase beta chain (414 aa).

The span at 1–26 shows a compositional bias: basic and acidic residues; the sequence is MVSTFSRKDQNYKNDDLNQPSKEGRF. The tract at residues 1–27 is disordered; that stretch reads MVSTFSRKDQNYKNDDLNQPSKEGRFG. Position 109 is an N6-(pyridoxal phosphate)lysine (lysine 109).

The protein belongs to the TrpB family. Tetramer of two alpha and two beta chains. It depends on pyridoxal 5'-phosphate as a cofactor.

The catalysed reaction is (1S,2R)-1-C-(indol-3-yl)glycerol 3-phosphate + L-serine = D-glyceraldehyde 3-phosphate + L-tryptophan + H2O. It participates in amino-acid biosynthesis; L-tryptophan biosynthesis; L-tryptophan from chorismate: step 5/5. Functionally, the beta subunit is responsible for the synthesis of L-tryptophan from indole and L-serine. The chain is Tryptophan synthase beta chain from Prochlorococcus marinus (strain MIT 9301).